The chain runs to 548 residues: Lipase 2 (548 aa).

An N-terminal signal peptide occupies residues 1 to 14 (MKLCLLALGAAVAA). Cys-74 and Cys-111 are joined by a disulfide. Ser-223 functions as the Acyl-ester intermediate in the catalytic mechanism. An intrachain disulfide couples Cys-282 to Cys-291. Glu-355 acts as the Charge relay system in catalysis. The N-linked (GlcNAc...) asparagine glycan is linked to Asn-365. His-463 (charge relay system) is an active-site residue.

It belongs to the type-B carboxylesterase/lipase family.

The enzyme catalyses a triacylglycerol + H2O = a diacylglycerol + a fatty acid + H(+). The chain is Lipase 2 (LIP2) from Diutina rugosa (Yeast).